Consider the following 24-residue polypeptide: uncharacterized protein (24 aa).

The Cytoplasmic portion of the chain corresponds to 1–3; the sequence is MKK. Residues 4 to 24 form a helical membrane-spanning segment; it reads TTIIMMGVAIIVVLGTELGWW.

Its subcellular location is the cell inner membrane. This is an uncharacterized protein from Escherichia coli (strain K12).